Here is a 462-residue protein sequence, read N- to C-terminus: Chromosomal replication initiator protein DnaA (462 aa).

The segment at 1–86 (MSLSLWQQCL…EVGNKPVSQN (86 aa)) is domain I, interacts with DnaA modulators. The tract at residues 86–125 (NDSPPQRVVTHTPVAPAPQNTSVRPSWDNTAVQPELSYRS) is domain II. A domain III, AAA+ region region spans residues 126-342 (NVNPKHTFDN…GALNRVIANA (217 aa)). ATP contacts are provided by Gly170, Gly172, Lys173, and Thr174. The tract at residues 343-462 (NFTGRAITID…FSNLIRTLSS (120 aa)) is domain IV, binds dsDNA.

It belongs to the DnaA family. As to quaternary structure, oligomerizes as a right-handed, spiral filament on DNA at oriC.

The protein resides in the cytoplasm. Plays an essential role in the initiation and regulation of chromosomal replication. ATP-DnaA binds to the origin of replication (oriC) to initiate formation of the DNA replication initiation complex once per cell cycle. Binds the DnaA box (a 9 base pair repeat at the origin) and separates the double-stranded (ds)DNA. Forms a right-handed helical filament on oriC DNA; dsDNA binds to the exterior of the filament while single-stranded (ss)DNA is stabiized in the filament's interior. The ATP-DnaA-oriC complex binds and stabilizes one strand of the AT-rich DNA unwinding element (DUE), permitting loading of DNA polymerase. After initiation quickly degrades to an ADP-DnaA complex that is not apt for DNA replication. Binds acidic phospholipids. In Photorhabdus laumondii subsp. laumondii (strain DSM 15139 / CIP 105565 / TT01) (Photorhabdus luminescens subsp. laumondii), this protein is Chromosomal replication initiator protein DnaA.